A 737-amino-acid polypeptide reads, in one-letter code: FYVE, RhoGEF and PH domain-containing protein 3 (737 aa).

Residues 1–151 form a disordered region; sequence MESGGGSSTP…KADKDAGLAQ (151 aa). Over residues 126–136 the composition is skewed to acidic residues; the sequence is ADSDVGEEPDS. Ser-128 carries the phosphoserine modification. The DH domain occupies 157 to 341; that stretch reads KLLHIAQELL…STAANHSNAA (185 aa). Residues 370-469 enclose the PH 1 domain; sequence ELIKEGQIQK…WIQIIQATIE (100 aa). Positions 487–533 are disordered; the sequence is QDEDPSLSPDMPITSTSPVEPVVTTEGGSGAAGLEPRKLSSKTRRDK. Low complexity predominate over residues 500 to 512; that stretch reads TSTSPVEPVVTTE. Over residues 521-533 the composition is skewed to basic and acidic residues; sequence EPRKLSSKTRRDK. Residues 532 to 588 form an FYVE-type zinc finger; it reads DKEKQSCKSCGETFNSITKRRHHCKLCGVVICGKCSEFKAENSRQSRVCRECFLTQP. Residues Cys-538, Cys-541, Cys-555, Cys-558, Cys-563, Cys-566, Cys-580, and Cys-583 each contribute to the Zn(2+) site. Disordered regions lie at residues 589–620 and 713–737; these read VAPE…SLLC and AARG…AAAP. The PH 2 domain occupies 616 to 715; it reads PSLLCGPLRL…WLETLSTAAR (100 aa).

It is found in the cytoplasm. The protein localises to the cytoskeleton. Functionally, promotes the formation of filopodia. May activate CDC42, a member of the Ras-like family of Rho- and Rac proteins, by exchanging bound GDP for free GTP. Plays a role in regulating the actin cytoskeleton and cell shape. This is FYVE, RhoGEF and PH domain-containing protein 3 (FGD3) from Pongo abelii (Sumatran orangutan).